We begin with the raw amino-acid sequence, 311 residues long: Methionyl-tRNA formyltransferase (311 aa).

110–113 contributes to the (6S)-5,6,7,8-tetrahydrofolate binding site; sequence SLLP.

The protein belongs to the Fmt family.

It carries out the reaction L-methionyl-tRNA(fMet) + (6R)-10-formyltetrahydrofolate = N-formyl-L-methionyl-tRNA(fMet) + (6S)-5,6,7,8-tetrahydrofolate + H(+). Its function is as follows. Attaches a formyl group to the free amino group of methionyl-tRNA(fMet). The formyl group appears to play a dual role in the initiator identity of N-formylmethionyl-tRNA by promoting its recognition by IF2 and preventing the misappropriation of this tRNA by the elongation apparatus. In Streptococcus agalactiae serotype Ia (strain ATCC 27591 / A909 / CDC SS700), this protein is Methionyl-tRNA formyltransferase.